The chain runs to 331 residues: Major outer membrane protein P.IB (331 aa).

The signal sequence occupies residues Met1–Ala19.

It belongs to the Gram-negative porin family. Homotrimer.

It is found in the cell outer membrane. In terms of biological role, serves as a slightly cation selective porin. The polypeptide is Major outer membrane protein P.IB (porB) (Neisseria meningitidis serogroup B).